A 274-amino-acid polypeptide reads, in one-letter code: Bis(5'-nucleosyl)-tetraphosphatase, symmetrical (274 aa).

The protein belongs to the Ap4A hydrolase family.

The catalysed reaction is P(1),P(4)-bis(5'-adenosyl) tetraphosphate + H2O = 2 ADP + 2 H(+). Hydrolyzes diadenosine 5',5'''-P1,P4-tetraphosphate to yield ADP. The chain is Bis(5'-nucleosyl)-tetraphosphatase, symmetrical from Shewanella sp. (strain MR-4).